Reading from the N-terminus, the 81-residue chain is Small ribosomal subunit protein bS16 (81 aa).

It belongs to the bacterial ribosomal protein bS16 family.

This Caldicellulosiruptor bescii (strain ATCC BAA-1888 / DSM 6725 / KCTC 15123 / Z-1320) (Anaerocellum thermophilum) protein is Small ribosomal subunit protein bS16.